The following is a 296-amino-acid chain: Cyclin-dependent kinase 1 (296 aa).

The region spanning 5–288 (FQKLEKIGEG…AKNGLSHKYF (284 aa)) is the Protein kinase domain. ATP is bound by residues 11–19 (IGEGTYGVV) and lysine 34. Catalysis depends on aspartate 130, which acts as the Proton acceptor.

The protein belongs to the protein kinase superfamily. CMGC Ser/Thr protein kinase family. CDC2/CDKX subfamily.

Its subcellular location is the nucleus. It carries out the reaction L-seryl-[protein] + ATP = O-phospho-L-seryl-[protein] + ADP + H(+). The catalysed reaction is L-threonyl-[protein] + ATP = O-phospho-L-threonyl-[protein] + ADP + H(+). Cyclin-dependent kinase that acts as a master regulator of the mitotic and meiotic cell cycles. The polypeptide is Cyclin-dependent kinase 1 (Encephalitozoon cuniculi (strain GB-M1) (Microsporidian parasite)).